The sequence spans 270 residues: GTP cyclohydrolase FolE2 (270 aa).

Belongs to the GTP cyclohydrolase IV family.

The catalysed reaction is GTP + H2O = 7,8-dihydroneopterin 3'-triphosphate + formate + H(+). The protein operates within cofactor biosynthesis; 7,8-dihydroneopterin triphosphate biosynthesis; 7,8-dihydroneopterin triphosphate from GTP: step 1/1. In terms of biological role, converts GTP to 7,8-dihydroneopterin triphosphate. The protein is GTP cyclohydrolase FolE2 of Cupriavidus pinatubonensis (strain JMP 134 / LMG 1197) (Cupriavidus necator (strain JMP 134)).